A 552-amino-acid chain; its full sequence is CTP synthase (552 aa).

An amidoligase domain region spans residues 1 to 270 (MTKFVFVTGG…DGLICDKLRL (270 aa)). S13 provides a ligand contact to CTP. S13 is a binding site for UTP. ATP contacts are provided by residues 14-19 (SLGKGI) and D71. Residues D71 and E144 each coordinate Mg(2+). CTP is bound by residues 151–153 (DIE), 191–196 (KTKPTQ), and K227. UTP-binding positions include 191-196 (KTKPTQ) and K227. A Glutamine amidotransferase type-1 domain is found at 295-548 (QIAMVGKYVE…IKAAVEHQKP (254 aa)). G357 lines the L-glutamine pocket. The Nucleophile; for glutamine hydrolysis role is filled by C384. Residues 385–388 (LGMQ) and E408 contribute to the L-glutamine site. The tract at residues 432-451 (KTRSENSDLGGTMRLGAQSS) is disordered. R474 contacts L-glutamine. Catalysis depends on residues H521 and E523.

This sequence belongs to the CTP synthase family. In terms of assembly, homotetramer.

It carries out the reaction UTP + L-glutamine + ATP + H2O = CTP + L-glutamate + ADP + phosphate + 2 H(+). The catalysed reaction is L-glutamine + H2O = L-glutamate + NH4(+). The enzyme catalyses UTP + NH4(+) + ATP = CTP + ADP + phosphate + 2 H(+). The protein operates within pyrimidine metabolism; CTP biosynthesis via de novo pathway; CTP from UDP: step 2/2. Its activity is regulated as follows. Allosterically activated by GTP, when glutamine is the substrate; GTP has no effect on the reaction when ammonia is the substrate. The allosteric effector GTP functions by stabilizing the protein conformation that binds the tetrahedral intermediate(s) formed during glutamine hydrolysis. Inhibited by the product CTP, via allosteric rather than competitive inhibition. Functionally, catalyzes the ATP-dependent amination of UTP to CTP with either L-glutamine or ammonia as the source of nitrogen. Regulates intracellular CTP levels through interactions with the four ribonucleotide triphosphates. This is CTP synthase from Acidovorax sp. (strain JS42).